A 301-amino-acid polypeptide reads, in one-letter code: Nucleosome assembly protein 1;3 (301 aa).

Residues 15–69 are a coiled coil; the sequence is VETLKNKLQALAEQHVDVLESLAPVVRKRVDVLIEIQSQHDELEAKFLEEKSALE. The short motif at 36-51 is the Nuclear export signal element; it reads LAPVVRKRVDVLIEIQ. A disordered region spans residues 279-301; that stretch reads EDYGASWVDDEEDDDDEYSDEEA. S297 is modified (phosphoserine; by CK2).

This sequence belongs to the nucleosome assembly protein (NAP) family.

Its subcellular location is the nucleus. It localises to the cytoplasm. Functionally, may modulate chromatin structure by regulation of nucleosome assembly/disassembly. This Oryza sativa subsp. indica (Rice) protein is Nucleosome assembly protein 1;3 (NAP1;3).